A 378-amino-acid polypeptide reads, in one-letter code: Ret finger protein-like 2 (378 aa).

The segment at 101 to 143 (CPVCSDYLEKPMSLECGCAVCLKCINSLQKEPHGEDLLCCCSS) adopts an RING-type; degenerate zinc-finger fold. A B30.2/SPRY domain is found at 168–362 (EPKLKKILQM…DQGVLSICPL (195 aa)).

As to expression, seems to be expressed in prostate and less abundantly in adult brain, fetal liver, and fetal kidney.

This is Ret finger protein-like 2 (RFPL2) from Homo sapiens (Human).